A 139-amino-acid polypeptide reads, in one-letter code: MRIMGLDVGSKTVGVAISDPLGFTAQGLEIIPIDEEKNSFGFERLSELVKQYQVDKFVVGLPKNMNNTSGPRVEASQAYGKKIEDLFHIPVVYQDERLTTVQAERMLIEQADISRGKRKKVIDKLAAQLILQNYLDRTF.

It belongs to the YqgF nuclease family.

The protein resides in the cytoplasm. Its function is as follows. Could be a nuclease involved in processing of the 5'-end of pre-16S rRNA. This is Putative pre-16S rRNA nuclease from Streptococcus uberis (strain ATCC BAA-854 / 0140J).